Here is a 147-residue protein sequence, read N- to C-terminus: Large ribosomal subunit protein uL15 (147 aa).

Over residues Met1–Ser10 the composition is skewed to polar residues. The tract at residues Met1–Arg48 is disordered. A compositionally biased stretch (basic residues) spans Lys11–Gly20. A compositionally biased stretch (gly residues) spans Arg21–Ser31. The span at Gly32–Arg47 shows a compositional bias: basic residues.

It belongs to the universal ribosomal protein uL15 family. In terms of assembly, part of the 50S ribosomal subunit.

Its function is as follows. Binds to the 23S rRNA. The chain is Large ribosomal subunit protein uL15 from Buchnera aphidicola subsp. Baizongia pistaciae (strain Bp).